The primary structure comprises 809 residues: Leucine--tRNA ligase (809 aa).

The 'HIGH' region signature appears at 40–51 (PYPSGQGLHVGH). The 'KMSKS' region motif lies at 581–585 (KMSKS). Position 584 (lysine 584) interacts with ATP.

It belongs to the class-I aminoacyl-tRNA synthetase family.

It is found in the cytoplasm. It carries out the reaction tRNA(Leu) + L-leucine + ATP = L-leucyl-tRNA(Leu) + AMP + diphosphate. This is Leucine--tRNA ligase from Levilactobacillus brevis (strain ATCC 367 / BCRC 12310 / CIP 105137 / JCM 1170 / LMG 11437 / NCIMB 947 / NCTC 947) (Lactobacillus brevis).